Here is a 322-residue protein sequence, read N- to C-terminus: Lipoyl synthase (322 aa).

[4Fe-4S] cluster contacts are provided by Cys-68, Cys-73, Cys-79, Cys-94, Cys-98, Cys-101, and Ser-309. The Radical SAM core domain maps to 80–298 (FNHGTASFMI…RVAGVEMGFS (219 aa)).

It belongs to the radical SAM superfamily. Lipoyl synthase family. [4Fe-4S] cluster serves as cofactor.

The protein resides in the cytoplasm. It carries out the reaction [[Fe-S] cluster scaffold protein carrying a second [4Fe-4S](2+) cluster] + N(6)-octanoyl-L-lysyl-[protein] + 2 oxidized [2Fe-2S]-[ferredoxin] + 2 S-adenosyl-L-methionine + 4 H(+) = [[Fe-S] cluster scaffold protein] + N(6)-[(R)-dihydrolipoyl]-L-lysyl-[protein] + 4 Fe(3+) + 2 hydrogen sulfide + 2 5'-deoxyadenosine + 2 L-methionine + 2 reduced [2Fe-2S]-[ferredoxin]. It participates in protein modification; protein lipoylation via endogenous pathway; protein N(6)-(lipoyl)lysine from octanoyl-[acyl-carrier-protein]: step 2/2. Catalyzes the radical-mediated insertion of two sulfur atoms into the C-6 and C-8 positions of the octanoyl moiety bound to the lipoyl domains of lipoate-dependent enzymes, thereby converting the octanoylated domains into lipoylated derivatives. The chain is Lipoyl synthase from Idiomarina loihiensis (strain ATCC BAA-735 / DSM 15497 / L2-TR).